The primary structure comprises 277 residues: Protein RKD3 (277 aa).

The 85-residue stretch at Lys142 to Lys226 folds into the RWP-RK domain. Residues Arg201–Val246 adopt a coiled-coil conformation.

It is found in the nucleus. In terms of biological role, putative transcription factor. The polypeptide is Protein RKD3 (RKD3) (Arabidopsis thaliana (Mouse-ear cress)).